Consider the following 948-residue polypeptide: Non-lysosomal glucosylceramidase (948 aa).

Over 1 to 736 (MAEPLAVETK…VMDGPSAYCS (736 aa)) the chain is Extracellular. Basic and acidic residues predominate over residues 177–195 (STRDKTSDPDGDPDGERTK). Residues 177 to 197 (STRDKTSDPDGDPDGERTKCQ) are disordered. Asn-200 carries an N-linked (GlcNAc...) asparagine glycan. A Phosphoserine modification is found at Ser-214. N-linked (GlcNAc...) asparagine glycans are attached at residues Asn-288, Asn-555, and Asn-629. A phosphoserine mark is found at Ser-667 and Ser-669. A glycan (N-linked (GlcNAc...) asparagine) is linked at Asn-673. A helical membrane pass occupies residues 737-753 (GLWLAALQAMSAMATIL). Residues 754–948 (DQPNDCLRYQ…ALERRRAQRD (195 aa)) are Cytoplasmic-facing.

Belongs to the non-lysosomal glucosylceramidase family.

The protein localises to the cell membrane. It carries out the reaction a beta-D-glucosyl-(1&lt;-&gt;1')-N-acylsphing-4-enine + H2O = an N-acylsphing-4-enine + D-glucose. In terms of biological role, non-lysosomal glucosylceramidase that catalyzes the conversion of glucosylceramide to free glucose and ceramide. The chain is Non-lysosomal glucosylceramidase from Drosophila melanogaster (Fruit fly).